We begin with the raw amino-acid sequence, 213 residues long: Thymidylate kinase (213 aa).

10-17 is a binding site for ATP; the sequence is GLEGAGKT.

Belongs to the thymidylate kinase family.

The catalysed reaction is dTMP + ATP = dTDP + ADP. Phosphorylation of dTMP to form dTDP in both de novo and salvage pathways of dTTP synthesis. This is Thymidylate kinase from Escherichia coli O6:K15:H31 (strain 536 / UPEC).